Here is a 212-residue protein sequence, read N- to C-terminus: Large ribosomal subunit protein uL3 (212 aa).

An N5-methylglutamine modification is found at Gln153.

The protein belongs to the universal ribosomal protein uL3 family. As to quaternary structure, part of the 50S ribosomal subunit. Forms a cluster with proteins L14 and L19. In terms of processing, methylated by PrmB.

In terms of biological role, one of the primary rRNA binding proteins, it binds directly near the 3'-end of the 23S rRNA, where it nucleates assembly of the 50S subunit. The polypeptide is Large ribosomal subunit protein uL3 (Shewanella frigidimarina (strain NCIMB 400)).